Consider the following 327-residue polypeptide: Cell surface glycoprotein CD200 receptor 1 (327 aa).

The N-terminal stretch at 1-23 (MLCFWRTSHVAVLLIWGVFAAES) is a signal peptide. The Extracellular segment spans residues 24 to 239 (SCPDKNQTMQ…GRGGDQLLGS (216 aa)). One can recognise an Ig-like V-type domain in the interval 26 to 145 (PDKNQTMQNN…GNFQNIYDLQ (120 aa)). 8 N-linked (GlcNAc...) asparagine glycosylation sites follow: N29, N34, N43, N96, N159, N187, N192, and N222. 2 disulfide bridges follow: C58-C129 and C81-C97. The 80-residue stretch at 147 to 226 (LVPPEVTHFP…HLTTGNQSLS (80 aa)) folds into the Ig-like C2-type domain. Disulfide bonds link C164–C213 and C183–C201. Residues 240–260 (YIQYIIPSIIILIIIGCICLL) traverse the membrane as a helical segment. Residues 261 to 327 (KISGCRKCKL…DCLTLSAMGI (67 aa)) are Cytoplasmic-facing.

Belongs to the CD200R family. As to quaternary structure, CD200 and CD200R1 interact via their respective N-terminal Ig-like domains. Phosphorylated on tyrosine residues. Post-translationally, highly N-glycosylated. Restricted to cells of the myeloid lineage.

It localises to the cell membrane. Functionally, inhibitory receptor for the CD200/OX2 cell surface glycoprotein. Limits inflammation by inhibiting the expression of pro-inflammatory molecules including TNF-alpha, interferons, and inducible nitric oxide synthase (iNOS) in response to selected stimuli. The sequence is that of Cell surface glycoprotein CD200 receptor 1 (Cd200r1) from Rattus norvegicus (Rat).